A 409-amino-acid chain; its full sequence is Argininosuccinate synthase (409 aa).

ATP contacts are provided by residues 16–24 (AYSGGLDTS) and alanine 44. 2 residues coordinate L-citrulline: tyrosine 96 and serine 101. Glycine 126 contacts ATP. L-aspartate is bound by residues threonine 128, asparagine 132, and aspartate 133. Asparagine 132 lines the L-citrulline pocket. L-citrulline-binding residues include arginine 136, serine 185, serine 194, glutamate 270, and tyrosine 282.

It belongs to the argininosuccinate synthase family. Type 1 subfamily. In terms of assembly, homotetramer.

It localises to the cytoplasm. The catalysed reaction is L-citrulline + L-aspartate + ATP = 2-(N(omega)-L-arginino)succinate + AMP + diphosphate + H(+). The protein operates within amino-acid biosynthesis; L-arginine biosynthesis; L-arginine from L-ornithine and carbamoyl phosphate: step 2/3. This Shewanella piezotolerans (strain WP3 / JCM 13877) protein is Argininosuccinate synthase.